The following is a 39-amino-acid chain: Ribonuclease UK114 (39 aa).

The protein belongs to the RutC family. Monomer. Post-translationally, the N-terminus may be blocked. As to expression, mainly expressed in the liver and kidney. Lower expression found in intestine, gizzard, glandular stomach, heart, brain and spleen.

It is found in the cytoplasm. In terms of biological role, endoribonuclease responsible for the inhibition of the translation by cleaving mRNA. Inhibits cell-free protein synthesis. Cleaves phosphodiester bonds only in single-stranded RNA. The protein is Ribonuclease UK114 of Gallus gallus (Chicken).